The sequence spans 321 residues: Cyclic AMP-AMP-AMP synthase (321 aa).

Lys-63 is an ATP binding site. Positions 72 and 74 each coordinate Mg(2+). ATP contacts are provided by residues Asp-74, His-162, Lys-185, 201 to 203, and Asn-270; that span reads KSF.

Belongs to the CD-NTase family. A01 subfamily. In terms of assembly, forms complexes with Cap7 with 1:1 and 2:2 stoichimetry, and a 1:1:6 CdnC:Cap7:Cap6 complex. The cofactor is Mg(2+).

It carries out the reaction 3 ATP = 3',3',3'-c-tri-AMP + 3 diphosphate. It catalyses the reaction 2 ATP = 3',3'-c-di-AMP + 2 diphosphate. The 2:2 CdnC:Cap7 (Cap7 is also called HORMA) complex is activated for cAAA synthesis by long dsDNA, but not 40 bp dsDNA or ssDNA; the 1:1 complex is inactive in vitro. The 2:2:DNA complex is catalytically disassembled and inactivated by Cap6 (also called Trip13). Cyclic nucleotide synthase (second messenger synthase) of a CBASS antivirus system. CBASS (cyclic oligonucleotide-based antiphage signaling system) provides immunity against bacteriophage. The CD-NTase protein synthesizes cyclic nucleotides in response to infection; these serve as specific second messenger signals. The signals activate a diverse range of effectors, leading to bacterial cell death and thus abortive phage infection. A type III-C(AAA) CBASS system. Its function is as follows. Cyclic nucleotide synthase that upon activation catalyzes the synthesis of 3',3',3'-cyclic AMP-AMP-AMP (3',3',3'-c-tri-AMP or cAAA) as the major product, and 3',3'-c-di-AMP as a minor product. Cannot use GTP as a substrate. In terms of biological role, protects E.coli strain JP313 against bacteriophage lambda cI- infection. When the cdnC-cap7-cap6-nucC operon is transformed into a susceptible strain it confers bacteriophage immunity. Mutations in the sensor (Cap7 also called HORMA) or effector proteins (CdnC, NucC) but not the disassembly protein (Cap6 also called Trip13) no longer confer immunity. The presence of the intact operon leads to culture collapse and cell death, which occurs before the phage has finished its replication cycle, thus protecting non-infected bacteria by aborting the phage infection and preventing its propagation. This chain is Cyclic AMP-AMP-AMP synthase, found in Escherichia coli (strain MS 115-1).